Reading from the N-terminus, the 248-residue chain is Probable septum site-determining protein MinC (248 aa).

Residues 94–125 (GMPPAMRGGQPAADFEAPAGEPQANPGAPEPQ) are disordered.

Belongs to the MinC family. In terms of assembly, interacts with MinD and FtsZ.

Its function is as follows. Cell division inhibitor that blocks the formation of polar Z ring septums. Rapidly oscillates between the poles of the cell to destabilize FtsZ filaments that have formed before they mature into polar Z rings. Prevents FtsZ polymerization. The polypeptide is Probable septum site-determining protein MinC (Brucella abortus (strain S19)).